The sequence spans 359 residues: 4-dedimethylamino-4-oxo-anhydrotetracycline transaminase OxyQ (359 aa).

Substrate contacts are provided by glycine 32, lysine 92, and asparagine 155. Pyridoxal 5'-phosphate is bound by residues 91–92 (TK), asparagine 155, tyrosine 186, and 216–218 (SLS). Lysine 219 bears the N6-(pyridoxal phosphate)lysine mark. Arginine 227 provides a ligand contact to pyridoxal 5'-phosphate. Residue arginine 341 participates in substrate binding.

Belongs to the class-I pyridoxal-phosphate-dependent aminotransferase family. Pyridoxal 5'-phosphate is required as a cofactor.

The protein operates within antibiotic biosynthesis; oxytetracycline biosynthesis. In terms of biological role, involved in the biosynthesis of the tetracycline antibiotic, oxytetracycline. Catalyzes the conversion of 4-dedimethylamino-4-oxoanhydrotetracycline to yield 4-amino-4-de(dimethylamino)anhydrotetracycline (4-amino-ATC). The chain is 4-dedimethylamino-4-oxo-anhydrotetracycline transaminase OxyQ from Streptomyces rimosus.